A 483-amino-acid chain; its full sequence is Putative (R)-citramalate synthase CimA (483 aa).

The Pyruvate carboxyltransferase domain occupies 1-245 (MRDGEQTPGV…DTGIKHEQIY (245 aa)).

Belongs to the alpha-IPM synthase/homocitrate synthase family. In terms of assembly, homodimer.

It carries out the reaction pyruvate + acetyl-CoA + H2O = (3R)-citramalate + CoA + H(+). It functions in the pathway amino-acid biosynthesis; L-isoleucine biosynthesis; 2-oxobutanoate from pyruvate: step 1/3. Its function is as follows. Catalyzes the condensation of pyruvate and acetyl-coenzyme A to form (R)-citramalate. The protein is Putative (R)-citramalate synthase CimA of Methanosarcina mazei (strain ATCC BAA-159 / DSM 3647 / Goe1 / Go1 / JCM 11833 / OCM 88) (Methanosarcina frisia).